The sequence spans 401 residues: Multidrug resistance protein MdtA (401 aa).

An N-terminal signal peptide occupies residues 1-20 (MNQNNKHRTLLFRAALAAIA).

The protein belongs to the membrane fusion protein (MFP) (TC 8.A.1) family. Part of a tripartite efflux system composed of MdtA, MdtB and MdtC.

It localises to the cell inner membrane. The protein is Multidrug resistance protein MdtA of Photorhabdus laumondii subsp. laumondii (strain DSM 15139 / CIP 105565 / TT01) (Photorhabdus luminescens subsp. laumondii).